The chain runs to 480 residues: Protein nucleotidyltransferase YdiU (480 aa).

ATP is bound by residues Gly86, Gly88, Arg89, Lys109, Asp121, Gly122, Arg172, and Arg179. Asp248 functions as the Proton acceptor in the catalytic mechanism. The Mg(2+) site is built by Asn249 and Asp258. Asp258 serves as a coordination point for ATP.

It belongs to the SELO family. Requires Mg(2+) as cofactor. The cofactor is Mn(2+).

The catalysed reaction is L-seryl-[protein] + ATP = 3-O-(5'-adenylyl)-L-seryl-[protein] + diphosphate. The enzyme catalyses L-threonyl-[protein] + ATP = 3-O-(5'-adenylyl)-L-threonyl-[protein] + diphosphate. It catalyses the reaction L-tyrosyl-[protein] + ATP = O-(5'-adenylyl)-L-tyrosyl-[protein] + diphosphate. It carries out the reaction L-histidyl-[protein] + UTP = N(tele)-(5'-uridylyl)-L-histidyl-[protein] + diphosphate. The catalysed reaction is L-seryl-[protein] + UTP = O-(5'-uridylyl)-L-seryl-[protein] + diphosphate. The enzyme catalyses L-tyrosyl-[protein] + UTP = O-(5'-uridylyl)-L-tyrosyl-[protein] + diphosphate. In terms of biological role, nucleotidyltransferase involved in the post-translational modification of proteins. It can catalyze the addition of adenosine monophosphate (AMP) or uridine monophosphate (UMP) to a protein, resulting in modifications known as AMPylation and UMPylation. This Salmonella heidelberg (strain SL476) protein is Protein nucleotidyltransferase YdiU.